The sequence spans 184 residues: Elongation factor P 1 (184 aa).

Belongs to the elongation factor P family.

The protein localises to the cytoplasm. It functions in the pathway protein biosynthesis; polypeptide chain elongation. Functionally, involved in peptide bond synthesis. Stimulates efficient translation and peptide-bond synthesis on native or reconstituted 70S ribosomes in vitro. Probably functions indirectly by altering the affinity of the ribosome for aminoacyl-tRNA, thus increasing their reactivity as acceptors for peptidyl transferase. This Protochlamydia amoebophila (strain UWE25) protein is Elongation factor P 1 (efp1).